Consider the following 573-residue polypeptide: Probable CoA ligase CCL13 (573 aa).

ATP is bound by residues 216-224, 352-357, aspartate 449, 461-464, and lysine 556; these read TSGTTARPK, HIYGLT, and LKDR. Residues 284–352 are SBD1; it reads SPKAIFDNIH…MEEMGFQVNH (69 aa). Residues 353–429 are SBD2; the sequence is IYGLTETHGP…FRGNTVMSGY (77 aa).

This sequence belongs to the ATP-dependent AMP-binding enzyme family.

The protein localises to the cytoplasm. It is found in the cytosol. This chain is Probable CoA ligase CCL13, found in Humulus lupulus (European hop).